The primary structure comprises 307 residues: Ribosomal RNA small subunit methyltransferase A (307 aa).

Asparagine 35, valine 37, glycine 62, glutamate 83, aspartate 113, and asparagine 136 together coordinate S-adenosyl-L-methionine.

This sequence belongs to the class I-like SAM-binding methyltransferase superfamily. rRNA adenine N(6)-methyltransferase family. RsmA subfamily.

Its subcellular location is the cytoplasm. The enzyme catalyses adenosine(1518)/adenosine(1519) in 16S rRNA + 4 S-adenosyl-L-methionine = N(6)-dimethyladenosine(1518)/N(6)-dimethyladenosine(1519) in 16S rRNA + 4 S-adenosyl-L-homocysteine + 4 H(+). Its function is as follows. Specifically dimethylates two adjacent adenosines (A1518 and A1519) in the loop of a conserved hairpin near the 3'-end of 16S rRNA in the 30S particle. May play a critical role in biogenesis of 30S subunits. In Bifidobacterium longum subsp. infantis (strain ATCC 15697 / DSM 20088 / JCM 1222 / NCTC 11817 / S12), this protein is Ribosomal RNA small subunit methyltransferase A.